The sequence spans 329 residues: MNNLNSVFDYEDIQLIPNKCVINSRSEADTSVKLGNYTFKLPVVPANMQTIIDDKIAEMLAKEGYFYIMHRFEAENRAAFIKKMHKDGLIASISVGVKADEHAFIREISAEALIPEFITIDIAHGHADSVIKTIQLIKRLMPQTFVIAGNVGTPEAVRELENAGADATKVGIGPGKVCITKVKTGFGTGGWQLAAVKWCAKAASKPVIADGGIRTHGDIAKSIRMGATMVMVGSLFAAHEESPGQTVERDGQLFKEYFGSASEYQKGEHKNVEGKKILLPHKGSLKDTLKEMEEDLQSSISYAGGRDLSALTKVDYVVVKNSIWNGDAI.

C178 (thioimidate intermediate) is an active-site residue. 207–230 provides a ligand contact to NADP(+); it reads VIADGGIRTHGDIAKSIRMGATMV.

The protein belongs to the IMPDH/GMPR family. GuaC type 2 subfamily.

The enzyme catalyses IMP + NH4(+) + NADP(+) = GMP + NADPH + 2 H(+). In terms of biological role, catalyzes the irreversible NADPH-dependent deamination of GMP to IMP. It functions in the conversion of nucleobase, nucleoside and nucleotide derivatives of G to A nucleotides, and in maintaining the intracellular balance of A and G nucleotides. This Lactococcus lactis subsp. cremoris (strain SK11) protein is GMP reductase.